The following is a 135-amino-acid chain: Galectin-1 (135 aa).

An N-acetylalanine modification is found at Ala2. One can recognise a Galectin domain in the interval 4–135 (GLVASNLNLK…DFKIKCVAFE (132 aa)). 2 positions are modified to N6-acetyllysine: Lys13 and Lys29. Ser30 carries the phosphoserine modification. A beta-D-galactoside contacts are provided by residues 45 to 49 (HFNPR), His53, Asn62, and 69 to 72 (WGAE). Lys108 carries the N6-acetyllysine; alternate modification. An N6-succinyllysine; alternate modification is found at Lys108. Residue Lys128 is modified to N6-acetyllysine.

As to quaternary structure, homodimer. Binds LGALS3BP. Interacts with CD2, CD3, CD4, CD6, CD7, CD43, ALCAM and CD45. Interacts with laminin (via poly-N-acetyllactosamine). Interacts with SUSD2. Interacts with cargo receptor TMED10; the interaction mediates the translocation from the cytoplasm into the ERGIC (endoplasmic reticulum-Golgi intermediate compartment) and thereby secretion.

The protein resides in the secreted. It localises to the extracellular space. Its subcellular location is the extracellular matrix. The protein localises to the cytoplasm. Its function is as follows. Lectin that binds beta-galactoside and a wide array of complex carbohydrates. Plays a role in regulating apoptosis, cell proliferation and cell differentiation. Inhibits CD45 protein phosphatase activity and therefore the dephosphorylation of Lyn kinase. Strong inducer of T-cell apoptosis. This is Galectin-1 (LGALS1) from Ovis aries (Sheep).